The chain runs to 226 residues: Isoprenyl transferase (226 aa).

Residue Asp12 is part of the active site. Asp12 provides a ligand contact to Mg(2+). Substrate is bound by residues 13–16, Trp17, Lys25, His29, and 57–59; these read GNAR and SSE. The active-site Proton acceptor is the Asn60. Substrate contacts are provided by residues Trp61, Arg63, Arg174, and 180–182; that span reads RIS. Residue Glu193 coordinates Mg(2+).

This sequence belongs to the UPP synthase family. As to quaternary structure, homodimer. Requires Mg(2+) as cofactor.

Functionally, catalyzes the condensation of isopentenyl diphosphate (IPP) with allylic pyrophosphates generating different type of terpenoids. The chain is Isoprenyl transferase from Rickettsia sibirica (strain ATCC VR-151 / 246).